A 746-amino-acid chain; its full sequence is Histone-lysine N-methyltransferase EZH2 (746 aa).

Residues 1-340 (MGQTGKKSEK…AKEFAAALTA (340 aa)) are interaction with DNMT1, DNMT3A and DNMT3B. Phosphoserine; by PKB/AKT1 is present on Ser-21. The tract at residues 39–68 (KTMFSSNRQKILERTETLNQEWKQRRIQPV) is interaction with EED. O-linked (GlcNAc) serine glycosylation occurs at Ser-75. Ser-76 carries the post-translational modification Phosphoserine. The disordered stretch occupies residues 180–217 (QYNDDDDDDDGDDPDEREEKQKDLEDNRDDKETCPPRK). A compositionally biased stretch (acidic residues) spans 182–195 (NDDDDDDDGDDPDE). The segment covering 196–217 (REEKQKDLEDNRDDKETCPPRK) has biased composition (basic and acidic residues). The segment at 329–522 (EGAKEFAAAL…SSNHVYNYQP (194 aa)) is interaction with CDYL. Thr-339 is modified (phosphothreonine). A disordered region spans residues 340–426 (AERIKTPPKR…PIKMKPNIEP (87 aa)). Thr-345 is modified (phosphothreonine; by CDK1 and CDK2). Residues 345–357 (TPPKRPGGRRRGR) show a composition bias toward basic residues. A phosphoserine mark is found at Ser-363 and Ser-366. Phosphothreonine is present on Thr-367. A compositionally biased stretch (basic and acidic residues) spans 374–385 (ESKDTDSDREAG). Thr-487 carries the phosphothreonine modification. The CXC domain occupies 503–605 (CRKIQLKKDG…SKNVSCKNCS (103 aa)). The SET domain occupies 612 to 727 (KHLLLAPSDV…TGEELFFDYR (116 aa)). A Glycyl lysine isopeptide (Lys-Gly) (interchain with G-Cter in SUMO2) cross-link involves residue Lys-634.

The protein belongs to the class V-like SAM-binding methyltransferase superfamily. Histone-lysine methyltransferase family. EZ subfamily. As to quaternary structure, component of the PRC2/EED-EZH2 complex, which includes EED, EZH2, SUZ12, RBBP4 and RBBP7 and possibly AEBP2. The minimum components required for methyltransferase activity of the PRC2/EED-EZH2 complex are EED, EZH2 and SUZ12. The PRC2 complex may also interact with DNMT1, DNMT3A, DNMT3B and PHF1 via the EZH2 subunit and with SIRT1 via the SUZ12 subunit. Interacts with HDAC1 and HDAC2. Binds ATRX via the SET domain. Interacts with PRAME. Interacts with CDYL. Interacts with EED. Interacts with BMAL1. Interacts with CLOCK and CRY1. Interacts with DNMT3L; the interaction is direct. Interacts with EZHIP; the interaction blocks EZH2 methyltransferase activity. Interacts with ZNF263; recruited to the SIX3 promoter along with other proteins involved in chromatin modification and transcriptional corepression where it contributes to transcriptional repression. Interacts with ARMC12. Interacts with ZMYND8; the interaction is dependent on the presence of chromatin. Interacts with DDX18; this interaction inhibits the PRC2 complex. Phosphorylated by AKT1. Phosphorylation by AKT1 reduces methyltransferase activity. Phosphorylation at Thr-345 by CDK1 and CDK2 promotes maintenance of H3K27me3 levels at EZH2-target loci, thus leading to epigenetic gene silencing. In terms of processing, sumoylated. Post-translationally, glycosylated: O-GlcNAcylation at Ser-75 by OGT increases stability of EZH2 and facilitates the formation of H3K27me3 by the PRC2/EED-EZH2 complex. Present in actively dividing cells. Widely expressed in early embryos. In later embryogenesis, expression restricted to central and peripheral nervous system, liver and thymus. In adult, highest expression in spleen, testis and placenta. Lower levels in intestine, muscle and ovary and very low levels in brain and liver. No expression in heart, thyroid gland, lung and kidney.

The protein localises to the nucleus. The protein resides in the chromosome. It catalyses the reaction L-lysyl(27)-[histone H3] + 3 S-adenosyl-L-methionine = N(6),N(6),N(6)-trimethyl-L-lysyl(27)-[histone H3] + 3 S-adenosyl-L-homocysteine + 3 H(+). Its function is as follows. Polycomb group (PcG) protein. Catalytic subunit of the PRC2/EED-EZH2 complex, which methylates (H3K9me) and 'Lys-27' (H3K27me) of histone H3, leading to transcriptional repression of the affected target gene. Able to mono-, di- and trimethylate 'Lys-27' of histone H3 to form H3K27me1, H3K27me2 and H3K27me3, respectively. Displays a preference for substrates with less methylation, loses activity when progressively more methyl groups are incorporated into H3K27, H3K27me0 &gt; H3K27me1 &gt; H3K27me2. Compared to EZH1-containing complexes, it is more abundant in embryonic stem cells and plays a major role in forming H3K27me3, which is required for embryonic stem cell identity and proper differentiation. The PRC2/EED-EZH2 complex may also serve as a recruiting platform for DNA methyltransferases, thereby linking two epigenetic repression systems. Genes repressed by the PRC2/EED-EZH2 complex include HOXA7, HOXB6 and HOXC8. EZH2 can also methylate non-histone proteins such as the transcription factor GATA4 and the nuclear receptor RORA. Regulates the circadian clock via histone methylation at the promoter of the circadian genes. Essential for the CRY1/2-mediated repression of the transcriptional activation of PER1/2 by the CLOCK-BMAL1 heterodimer; involved in the di and trimethylation of 'Lys-27' of histone H3 on PER1/2 promoters which is necessary for the CRY1/2 proteins to inhibit transcription. This is Histone-lysine N-methyltransferase EZH2 from Mus musculus (Mouse).